The chain runs to 470 residues: Suppressor of SWI4 1 homolog (470 aa).

The Brix domain maps to 29 to 292 (PHSFVFTRGR…LIKIQEGVGN (264 aa)). Residues Ser238 and Ser240 each carry the phosphoserine modification. Disordered regions lie at residues 240-264 (SEVE…GNMQ) and 323-470 (AQRQ…RRRN). Residues 342-355 (AHKKKSLAGIKRAR) show a composition bias toward basic residues. Ser362 carries the phosphoserine modification. N6-acetyllysine is present on Lys441. A compositionally biased stretch (basic residues) spans 447 to 457 (QRGKAKPRPRA).

The protein localises to the nucleus. Its subcellular location is the nucleolus. May have a role in cell growth. The protein is Suppressor of SWI4 1 homolog (Ppan) of Mus musculus (Mouse).